A 444-amino-acid polypeptide reads, in one-letter code: Methylenetetrahydrofolate--tRNA-(uracil-5-)-methyltransferase TrmFO (444 aa).

Residue 9–14 (GAGMAG) coordinates FAD.

This sequence belongs to the MnmG family. TrmFO subfamily. It depends on FAD as a cofactor.

Its subcellular location is the cytoplasm. It catalyses the reaction uridine(54) in tRNA + (6R)-5,10-methylene-5,6,7,8-tetrahydrofolate + NADH + H(+) = 5-methyluridine(54) in tRNA + (6S)-5,6,7,8-tetrahydrofolate + NAD(+). It carries out the reaction uridine(54) in tRNA + (6R)-5,10-methylene-5,6,7,8-tetrahydrofolate + NADPH + H(+) = 5-methyluridine(54) in tRNA + (6S)-5,6,7,8-tetrahydrofolate + NADP(+). Its function is as follows. Catalyzes the folate-dependent formation of 5-methyl-uridine at position 54 (M-5-U54) in all tRNAs. The protein is Methylenetetrahydrofolate--tRNA-(uracil-5-)-methyltransferase TrmFO of Cereibacter sphaeroides (strain ATCC 17023 / DSM 158 / JCM 6121 / CCUG 31486 / LMG 2827 / NBRC 12203 / NCIMB 8253 / ATH 2.4.1.) (Rhodobacter sphaeroides).